A 123-amino-acid chain; its full sequence is Large ribosomal subunit protein uL14 (123 aa).

Belongs to the universal ribosomal protein uL14 family. As to quaternary structure, part of the 50S ribosomal subunit. Forms a cluster with proteins L3 and L19. In the 70S ribosome, L14 and L19 interact and together make contacts with the 16S rRNA in bridges B5 and B8.

In terms of biological role, binds to 23S rRNA. Forms part of two intersubunit bridges in the 70S ribosome. In Proteus mirabilis (strain HI4320), this protein is Large ribosomal subunit protein uL14.